A 440-amino-acid polypeptide reads, in one-letter code: Probable exopolygalacturonase C (440 aa).

The N-terminal stretch at 1–21 (MLITNPALLGILASLAPLALG) is a signal peptide. Residues N24, N84, N151, and N219 are each glycosylated (N-linked (GlcNAc...) asparagine). 2 PbH1 repeats span residues 217 to 238 (GTNI…AVNT) and 240 to 261 (SHNI…SIGS). D231 (proton donor) is an active-site residue. The active site involves H255. N-linked (GlcNAc...) asparagine glycosylation is present at N271. One copy of the PbH1 3 repeat lies at 272–293 (ITNLRFEDVTVIDALYAARFKS). 2 N-linked (GlcNAc...) asparagine glycosylation sites follow: N313 and N350. C389 and C395 form a disulfide bridge. Residue N434 is glycosylated (N-linked (GlcNAc...) asparagine).

This sequence belongs to the glycosyl hydrolase 28 family.

The protein localises to the secreted. It catalyses the reaction [(1-&gt;4)-alpha-D-galacturonosyl](n) + H2O = alpha-D-galacturonate + [(1-&gt;4)-alpha-D-galacturonosyl](n-1). Specific in hydrolyzing the terminal glycosidic bond of polygalacturonic acid and oligogalacturonates. In Neosartorya fischeri (strain ATCC 1020 / DSM 3700 / CBS 544.65 / FGSC A1164 / JCM 1740 / NRRL 181 / WB 181) (Aspergillus fischerianus), this protein is Probable exopolygalacturonase C (pgxC).